The primary structure comprises 1113 residues: Receptor-type guanylate cyclase gcy-18 (1113 aa).

The N-terminal stretch at 1–18 (MLKTLLFILIFFNIPIIA) is a signal peptide. Topologically, residues 19 to 499 (IEEIPDIKEN…RGQRCSYLLE (481 aa)) are extracellular. N-linked (GlcNAc...) asparagine glycans are attached at residues asparagine 72, asparagine 369, and asparagine 456. A helical transmembrane segment spans residues 500–520 (ISVGSLIILLILISVVFFFLF). Residues 521–1113 (RYCENKQLEK…TNYIQNVEGV (593 aa)) lie on the Cytoplasmic side of the membrane. In terms of domain architecture, Protein kinase spans 543-848 (IDEEQVKSMM…RVRLNTEMVL (306 aa)). Positions 853–884 (SLVDQMMKMMEQYANNLEKLVAERTGMLEEAN) form a coiled coil. Positions 918 to 1048 (TILFSDIVGF…DTVNVSSRME (131 aa)) constitute a Guanylate cyclase domain. Mg(2+) is bound by residues aspartate 923, isoleucine 924, and aspartate 967.

The protein belongs to the adenylyl cyclase class-4/guanylyl cyclase family. As to expression, expressed specifically in AFD sensory neurons.

Its subcellular location is the cell membrane. It localises to the cell projection. The protein resides in the cilium. It catalyses the reaction GTP = 3',5'-cyclic GMP + diphosphate. Its function is as follows. Guanylate cyclase involved in the production of the second messenger cGMP. Regulates thermotaxis responses in AFD sensory neurons. May regulate AFD neuronal activity such as calcium responses to temperature gradients. The sequence is that of Receptor-type guanylate cyclase gcy-18 from Caenorhabditis elegans.